Reading from the N-terminus, the 183-residue chain is Crossover junction endodeoxyribonuclease RuvC (183 aa).

Residues D7, E66, and D138 contribute to the active site. Residues D7, E66, and D138 each contribute to the Mg(2+) site.

Belongs to the RuvC family. Homodimer which binds Holliday junction (HJ) DNA. The HJ becomes 2-fold symmetrical on binding to RuvC with unstacked arms; it has a different conformation from HJ DNA in complex with RuvA. In the full resolvosome a probable DNA-RuvA(4)-RuvB(12)-RuvC(2) complex forms which resolves the HJ. Requires Mg(2+) as cofactor.

The protein localises to the cytoplasm. It carries out the reaction Endonucleolytic cleavage at a junction such as a reciprocal single-stranded crossover between two homologous DNA duplexes (Holliday junction).. In terms of biological role, the RuvA-RuvB-RuvC complex processes Holliday junction (HJ) DNA during genetic recombination and DNA repair. Endonuclease that resolves HJ intermediates. Cleaves cruciform DNA by making single-stranded nicks across the HJ at symmetrical positions within the homologous arms, yielding a 5'-phosphate and a 3'-hydroxyl group; requires a central core of homology in the junction. The consensus cleavage sequence is 5'-(A/T)TT(C/G)-3'. Cleavage occurs on the 3'-side of the TT dinucleotide at the point of strand exchange. HJ branch migration catalyzed by RuvA-RuvB allows RuvC to scan DNA until it finds its consensus sequence, where it cleaves and resolves the cruciform DNA. This is Crossover junction endodeoxyribonuclease RuvC from Burkholderia ambifaria (strain MC40-6).